The chain runs to 307 residues: Taste receptor type 2 member 10 (307 aa).

Residues 1-6 (MLRVVE) lie on the Extracellular side of the membrane. A helical membrane pass occupies residues 7–27 (GIFIFVVISEXVFGVLGNGFI). The Cytoplasmic portion of the chain corresponds to 28-42 (GLVNCIDCAKNKLST). Residues 43–63 (IGFILTGLAISRIFLIWIIIT) traverse the membrane as a helical segment. At 64 to 100 (DGFIQIFSPDIYASGNLIEYISYFWVIGNQSSMWFAT) the chain is on the extracellular side. A glycan (N-linked (GlcNAc...) asparagine) is linked at N92. The chain crosses the membrane as a helical span at residues 101-121 (SLSIFYFLKIANFSNYIFLWL). Over 122–126 (KSRTN) the chain is Cytoplasmic. A helical membrane pass occupies residues 127 to 147 (MVLPFMIVFLLISSLLNFAHI). At 148–179 (AKILNDYKMKNDTVWDLNMYKSEYFIKQILLN) the chain is on the extracellular side. N-linked (GlcNAc...) asparagine glycosylation occurs at N158. The helical transmembrane segment at 180–200 (LGVIFFFTLSLITCVFLIISL) threads the bilayer. The Cytoplasmic portion of the chain corresponds to 201–227 (WRHNRQMQSNVTGLRDSNTEAHVKAMK). Residues 228–248 (VLISFXILFILYFIGMAIEIS) form a helical membrane-spanning segment. Over 249 to 257 (CFTVRENKL) the chain is Extracellular. A helical membrane pass occupies residues 258 to 278 (LLMFGMTTTAIYPWGHSFILI). At 279 to 307 (LGNSKLKQASLRVLQQLKCCEKRKNLRVT) the chain is on the cytoplasmic side.

It belongs to the G-protein coupled receptor T2R family.

It is found in the membrane. In terms of biological role, receptor that may play a role in the perception of bitterness and is gustducin-linked. May play a role in sensing the chemical composition of the gastrointestinal content. The activity of this receptor may stimulate alpha gustducin, mediate PLC-beta-2 activation and lead to the gating of TRPM5. This chain is Taste receptor type 2 member 10 (TAS2R10), found in Gorilla gorilla gorilla (Western lowland gorilla).